The sequence spans 395 residues: Na(+)/H(+) antiporter NhaA (395 aa).

11 helical membrane-spanning segments follow: residues 15–35 (FLGS…AGFV), 66–86 (IDAW…ILEI), 101–121 (VALP…TYLL), 132–152 (GWAI…LALG), 161–181 (AWLM…IAVF), 184–204 (NALY…LIGA), 219–239 (CILL…AGVI), 265–285 (ALTP…NVGV), 301–321 (LGIM…ATLL), 339–359 (VFGL…IANL), and 366–386 (LVIP…LAGW).

It belongs to the NhaA Na(+)/H(+) (TC 2.A.33) antiporter family.

The protein localises to the cell inner membrane. The catalysed reaction is Na(+)(in) + 2 H(+)(out) = Na(+)(out) + 2 H(+)(in). Functionally, na(+)/H(+) antiporter that extrudes sodium in exchange for external protons. In Gluconacetobacter diazotrophicus (strain ATCC 49037 / DSM 5601 / CCUG 37298 / CIP 103539 / LMG 7603 / PAl5), this protein is Na(+)/H(+) antiporter NhaA.